The chain runs to 147 residues: Small ribosomal subunit protein uS12 (147 aa).

It belongs to the universal ribosomal protein uS12 family. As to quaternary structure, part of the 30S ribosomal subunit.

Functionally, with S4 and S5 plays an important role in translational accuracy. Located at the interface of the 30S and 50S subunits. The chain is Small ribosomal subunit protein uS12 from Sulfolobus acidocaldarius (strain ATCC 33909 / DSM 639 / JCM 8929 / NBRC 15157 / NCIMB 11770).